A 237-amino-acid chain; its full sequence is AA9 family lytic polysaccharide monooxygenase C (237 aa).

Residues 1-15 form the signal peptide; sequence MKVLAPLILAGAASA. His-16 and His-99 together coordinate Cu(2+). Cystine bridges form between Cys-54/Cys-185 and Cys-155/Cys-237. An N-linked (GlcNAc...) asparagine glycan is attached at Asn-112. O2 is bound by residues His-171 and Gln-180. Tyr-182 is a Cu(2+) binding site.

Belongs to the polysaccharide monooxygenase AA9 family. It depends on Cu(2+) as a cofactor.

The protein localises to the secreted. It carries out the reaction [(1-&gt;4)-beta-D-glucosyl]n+m + reduced acceptor + O2 = 4-dehydro-beta-D-glucosyl-[(1-&gt;4)-beta-D-glucosyl]n-1 + [(1-&gt;4)-beta-D-glucosyl]m + acceptor + H2O.. With respect to regulation, is able to utilize various natural phenolic compounds as reducing agents. Most of these reducing agents are present in plants, either free or as lignin building blocks, such as sinapic acid, or as flavonoids such as catechin and dopamine. Phenolic compounds with 1,2-benzenediol and 1,2,3-benzenetriol moieties yield the highest release of oxidized and non-oxidized glucooligosaccharides from cellulose compared to monophenols or sulfur-containing compounds. Functionally, lytic polysaccharide monooxygenase (LPMO) that depolymerizes crystalline and amorphous polysaccharides via the oxidation of scissile alpha- or beta-(1-4)-glycosidic bonds, yielding C4 oxidation products. Catalysis by LPMOs requires the reduction of the active-site copper from Cu(II) to Cu(I) by a reducing agent and H(2)O(2) or O(2) as a cosubstrate. Shows oxidative cleavage of beta-(1-3, 1-4)-glucan from oat spelt or xyloglucan from tamarind seed, in addition to cellulose. The chain is AA9 family lytic polysaccharide monooxygenase C from Thermothelomyces thermophilus (strain ATCC 42464 / BCRC 31852 / DSM 1799) (Sporotrichum thermophile).